We begin with the raw amino-acid sequence, 79 residues long: Cytochrome b (79 aa).

The next 3 membrane-spanning stretches (helical) occupy residues 1–7 (SALFLAM), 31–52 (WLIR…YLHI), and 67–79 (WNIG…LTMA). H37 and H51 together coordinate heme b.

The protein belongs to the cytochrome b family. In terms of assembly, the cytochrome bc1 complex contains 11 subunits: 3 respiratory subunits (MT-CYB, CYC1 and UQCRFS1), 2 core proteins (UQCRC1 and UQCRC2) and 6 low-molecular weight proteins (UQCRH/QCR6, UQCRB/QCR7, UQCRQ/QCR8, UQCR10/QCR9, UQCR11/QCR10 and a cleavage product of UQCRFS1). This cytochrome bc1 complex then forms a dimer. Heme b serves as cofactor.

It localises to the mitochondrion inner membrane. Functionally, component of the ubiquinol-cytochrome c reductase complex (complex III or cytochrome b-c1 complex) that is part of the mitochondrial respiratory chain. The b-c1 complex mediates electron transfer from ubiquinol to cytochrome c. Contributes to the generation of a proton gradient across the mitochondrial membrane that is then used for ATP synthesis. This is Cytochrome b (MT-CYB) from Dipodomys californicus (California kangaroo rat).